We begin with the raw amino-acid sequence, 199 residues long: uncharacterized protein (199 aa).

To U.parvum UU376.

This is an uncharacterized protein from Ureaplasma parvum serovar 3 (strain ATCC 700970).